The chain runs to 857 residues: Protein app1 (857 aa).

One can recognise an ADF-H domain in the interval 6-133 (DTSTHGAEIR…NMDDIIRRVA (128 aa)). Disordered stretches follow at residues 167-562 (AKVA…VPQR), 585-622 (EVPSVPQPPVAPVVPEAPSVPQPPVAPVAPEVPSVPQR), and 693-723 (QLNEPVVPPLPPHDETQEPQVGGDVKATEHT). Residues 193–204 (KDSKDNSWDDSS) are compositionally biased toward basic and acidic residues. Residues 205 to 217 (KQSNTQTANTTSN) are compositionally biased toward low complexity. The span at 229-240 (AGRKEKSQENKP) shows a compositional bias: basic and acidic residues. Composition is skewed to polar residues over residues 276–295 (SISTTTTGSSYRSAESSHAP), 371–385 (PPASTTASKQDSPST), 399–409 (KQVSSNETSAQ), 443–452 (KISSFNSKAG), and 498–511 (SSASQKAAQPSVIT). Over residues 522-561 (VVPEAPSVHQPPAAPVAPEVPSAPQRPAAPVVPEAPSVPQ) the composition is skewed to low complexity. Composition is skewed to pro residues over residues 587 to 596 (PSVPQPPVAP) and 602 to 611 (PSVPQPPVAP). The segment covering 612 to 622 (VAPEVPSVPQR) has biased composition (low complexity). 2 consecutive SH3 domains span residues 725 to 785 (PTKT…ITGP) and 800 to 857 (GPGK…VEEI).

This is Protein app1 (app1) from Schizosaccharomyces pombe (strain 972 / ATCC 24843) (Fission yeast).